Consider the following 93-residue polypeptide: Cobalt transport protein CbiN (93 aa).

2 consecutive transmembrane segments (helical) span residues 5-25 (LILL…NHGG) and 63-83 (LLFT…LGYA).

Belongs to the CbiN family. In terms of assembly, forms an energy-coupling factor (ECF) transporter complex composed of an ATP-binding protein (A component, CbiO), a transmembrane protein (T component, CbiQ) and 2 possible substrate-capture proteins (S components, CbiM and CbiN) of unknown stoichimetry.

It is found in the cell inner membrane. It functions in the pathway cofactor biosynthesis; adenosylcobalamin biosynthesis. Part of the energy-coupling factor (ECF) transporter complex CbiMNOQ involved in cobalt import. The polypeptide is Cobalt transport protein CbiN (Klebsiella pneumoniae subsp. pneumoniae (strain ATCC 700721 / MGH 78578)).